A 616-amino-acid chain; its full sequence is Membrane protein insertase YidC (616 aa).

The helical transmembrane segment at 8-28 (MFVAIALSLVVLLGWHYFVTG) threads the bilayer. The interval 33–85 (RQRQAAQSQTAQTGAPQTADGIPSPSPREGGPNAPAPGTLPGAAAQGPVSRED) is disordered. Low complexity-rich tracts occupy residues 36 to 51 (QAAQSQTAQTGAPQTA) and 62 to 80 (GGPNAPAPGTLPGAAAQGP). The next 4 helical transmembrane spans lie at 386-406 (LLGNFGVSILLVTLILKLFFL), 460-480 (WPVLIQIPVFFALYKVLFITI), 516-536 (YIPIHLGVWPIIMGITMFIQM), and 551-571 (FAFMPIVFTFMLGSFPAGLVI).

The protein belongs to the OXA1/ALB3/YidC family. Type 1 subfamily. As to quaternary structure, interacts with the Sec translocase complex via SecD. Specifically interacts with transmembrane segments of nascent integral membrane proteins during membrane integration.

The protein localises to the cell inner membrane. Functionally, required for the insertion and/or proper folding and/or complex formation of integral membrane proteins into the membrane. Involved in integration of membrane proteins that insert both dependently and independently of the Sec translocase complex, as well as at least some lipoproteins. Aids folding of multispanning membrane proteins. This Methylorubrum extorquens (strain PA1) (Methylobacterium extorquens) protein is Membrane protein insertase YidC.